The following is a 629-amino-acid chain: Probable alpha-L-arabinofuranosidase A (629 aa).

The N-terminal stretch at 1-25 (MVALSTLSGLSALPFLFSLVQNVYG) is a signal peptide. Residues N36, N51, N140, N152, N168, N171, N260, N494, and N534 are each glycosylated (N-linked (GlcNAc...) asparagine).

It belongs to the glycosyl hydrolase 51 family.

Its subcellular location is the secreted. The enzyme catalyses Hydrolysis of terminal non-reducing alpha-L-arabinofuranoside residues in alpha-L-arabinosides.. It functions in the pathway glycan metabolism; L-arabinan degradation. Its function is as follows. Alpha-L-arabinofuranosidase involved in the degradation of arabinoxylan, a major component of plant hemicellulose. Acts only on small linear 1,5-alpha-linked L-arabinofuranosyl oligosaccharides. This Aspergillus oryzae (strain ATCC 42149 / RIB 40) (Yellow koji mold) protein is Probable alpha-L-arabinofuranosidase A (abfA).